The primary structure comprises 83 residues: Cell division topological specificity factor (83 aa).

This sequence belongs to the MinE family.

Prevents the cell division inhibition by proteins MinC and MinD at internal division sites while permitting inhibition at polar sites. This ensures cell division at the proper site by restricting the formation of a division septum at the midpoint of the long axis of the cell. The protein is Cell division topological specificity factor of Buchnera aphidicola subsp. Acyrthosiphon pisum (strain 5A).